The sequence spans 144 residues: Complexin-1 (144 aa).

Residues 1 to 10 (MVSFLGGGLL) are compositionally biased toward gly residues. The segment at 1–119 (MVSFLGGGLL…SGFPKNLDDL (119 aa)) is disordered. Basic and acidic residues-rich tracts occupy residues 18–27 (LEEKEDKKEG) and 36–86 (AEAK…EGRL). Residues 29-67 (EEEDPEIAEAKREAEEKRNEKYRKMEEEREVMRQGIRDK) adopt a coiled-coil conformation. A compositionally biased stretch (polar residues) spans 103–112 (LQSSAQSSGF). A Cysteine methyl ester modification is found at cysteine 141. The S-farnesyl cysteine moiety is linked to residue cysteine 141. The propeptide at 142–144 (NLQ) is removed in mature form.

This sequence belongs to the complexin/synaphin family. Binds to the SNARE core complex containing SNAP25, synaptobrevin and syntaxin-1. In terms of tissue distribution, expressed in a subset of neurons in the central nervous system, including large serotoninergic Retzius neurons and pressure-sensitive P cells.

The protein resides in the membrane. In terms of biological role, positively regulates a late step in synaptic vesicle exocytosis. The polypeptide is Complexin-1 (cpx1) (Hirudo medicinalis (Medicinal leech)).